The primary structure comprises 113 residues: UPF0482 protein YnfB (113 aa).

Residues 1 to 28 (MKITLSKRIGLLAFLLPCALALSTTVHA) form the signal peptide.

The protein belongs to the UPF0482 family.

This is UPF0482 protein YnfB from Escherichia coli O127:H6 (strain E2348/69 / EPEC).